The primary structure comprises 433 residues: F-box/kelch-repeat protein At1g24800 (433 aa).

Positions 23 to 71 (TSMCDLPPKLVGEKILTRIPITSLRAVRSTCKLWNALTKDRVLGKAAAQ) constitute an F-box domain. Kelch repeat units follow at residues 170–216 (HKIL…LYGV) and 286–337 (VLYH…RFDN).

The chain is F-box/kelch-repeat protein At1g24800 from Arabidopsis thaliana (Mouse-ear cress).